The sequence spans 308 residues: Acetaldehyde dehydrogenase (308 aa).

Position 14-17 (14-17 (TGNI)) interacts with NAD(+). Catalysis depends on Cys129, which acts as the Acyl-thioester intermediate. Residues 160 to 168 (SAGPGTRQN) and Asn280 contribute to the NAD(+) site.

The protein belongs to the acetaldehyde dehydrogenase family.

The enzyme catalyses acetaldehyde + NAD(+) + CoA = acetyl-CoA + NADH + H(+). The chain is Acetaldehyde dehydrogenase from Thermomicrobium roseum (strain ATCC 27502 / DSM 5159 / P-2).